The sequence spans 318 residues: Oxidoreductase swnN (318 aa).

It belongs to the NmrA-type oxidoreductase family. Isoflavone reductase subfamily.

The protein operates within mycotoxin biosynthesis. Its function is as follows. Aminotransferase; part of the gene cluster that mediates the biosynthesis of swainsonine (SW), a cytotoxic fungal alkaloid and a potential cancer therapy drug. Swainsonine production occurs via a multibranched pathway and is dispensable for fungal colonization of plants and infection of insect hosts. The first step of swainsonine biosynthesis is the production of the precursor pipecolic acid (PA) via conversion of L-lysine (Lys) to 1-piperideine-6-carboxylate (P6C) by the aminotransferase swnA, the latter being further reduced to PA by the reductase swnR. The PKS-NRPS hybrid synthetase swnK uptakes and condensates PA and malonyl-CoA with and without skipping of the ketoreductase (KR) domain in order to produce 3 intermediates, 1-oxoindolizidine, (1S)-1-hydroxyindolizin, and (1R)-1-hydroxyindolizine; with the transisomer (1S)-1-hydroxyindolizin being predominant. The terminal thioester reductase (TE) domain of swnK is involved in reduction of the thioester bond to release the intermediate aldehydes. The oxidoreductase swnN could contribute to the reduction of 1-oxoindolizidine to (1S)-1-hydroxyindolizin and (1R)-1-hydroxyindolizine, contributing to the major route of SW production. The dioxygenase swnH2 would be responsible for the oxidization of (1R)-1-hydroxyindolizine into (1R,2S)-1,2-dihydroxyindolizine and of (1S)-1-hydroxyindolizin to yield both (1R,2S)-1,2-dihydroxyindolizine and (1S,2S)-1,2-dihydroxyindolizine. The dioxygenase swnH1 then performs the conversion of the 1,2-dihydroxyindolizine epimers to SW. This is Oxidoreductase swnN from Arthroderma benhamiae (strain ATCC MYA-4681 / CBS 112371) (Trichophyton mentagrophytes).